A 679-amino-acid polypeptide reads, in one-letter code: UvrABC system protein B (679 aa).

Residues 31–414 (ENLTDGLAHQ…ELEKSGSEII (384 aa)) enclose the Helicase ATP-binding domain. Residue 44-51 (GVTGSGKT) participates in ATP binding. Positions 97 to 120 (YYDYYQPEAYVPSSDTFIEKDASI) match the Beta-hairpin motif. The Helicase C-terminal domain maps to 436-589 (QVDDLLSEAR…QTKYNEEHGI (154 aa)). Residues 639–674 (QQQIKKLEQQMYKFAQDLEFEKAAAIRDQLHQLREQ) form the UVR domain.

It belongs to the UvrB family. As to quaternary structure, forms a heterotetramer with UvrA during the search for lesions. Interacts with UvrC in an incision complex.

The protein localises to the cytoplasm. In terms of biological role, the UvrABC repair system catalyzes the recognition and processing of DNA lesions. A damage recognition complex composed of 2 UvrA and 2 UvrB subunits scans DNA for abnormalities. Upon binding of the UvrA(2)B(2) complex to a putative damaged site, the DNA wraps around one UvrB monomer. DNA wrap is dependent on ATP binding by UvrB and probably causes local melting of the DNA helix, facilitating insertion of UvrB beta-hairpin between the DNA strands. Then UvrB probes one DNA strand for the presence of a lesion. If a lesion is found the UvrA subunits dissociate and the UvrB-DNA preincision complex is formed. This complex is subsequently bound by UvrC and the second UvrB is released. If no lesion is found, the DNA wraps around the other UvrB subunit that will check the other stand for damage. The polypeptide is UvrABC system protein B (Haemophilus influenzae (strain ATCC 51907 / DSM 11121 / KW20 / Rd)).